We begin with the raw amino-acid sequence, 460 residues long: Piperamide synthase (460 aa).

The tract at residues Met-1 to Pro-23 is disordered. Residues His-168 and Asp-383 each act as proton acceptor in the active site. The Microbody targeting signal motif lies at Ser-458–Met-460.

It belongs to the plant acyltransferase family. As to quaternary structure, monomer. As to expression, confined to immature fruits perisperm. Also detectable in roots.

The protein resides in the cytoplasm. The catalysed reaction is piperidine + (E,E)-piperoyl-CoA = piperine + CoA + H(+). Its pathway is aromatic compound metabolism. In terms of biological role, involved in the biosynthesis of aromatic piperamides natural products such as piperine (1-piperoyl-piperidine), the pungent principle contributing, together with several terpenoids, to the aromatic properties of black pepper fruits, and displaying numerous pharmacological activities such as antiproliferative, antitumor, antiangiogenesis, antioxidant, antidiabetic, antiobesity, cardioprotective, antimicrobial, antiaging, and immunomodulatory effects. Can use piperidine and benzylamine as acceptors and various CoA-esters with aliphatic and aromatic amines as CoA-donors, including piperoyl-CoA, hexanoyl-CoA and octanoyl-CoA, and, to a lower extent, benzoyl-CoA. Mediates the conversion of piperidine to three piperine isomers in the presence of piperoyl-CoA. Its ability to convert in vitro piperidine to hexanoylpiperidine in the presence of hexanoyl-CoA, and to octanoylpiperidine in the presence of octanoyl-CoA is not confirmed in vivo according to fruits metabolome analysis. The sequence is that of Piperamide synthase from Piper nigrum (Black pepper).